We begin with the raw amino-acid sequence, 120 residues long: Small ribosomal subunit protein uS13 (120 aa).

Residues 93–120 (RRGLPCRGQKTKTNARTRKGKRKTVGAA) form a disordered region.

The protein belongs to the universal ribosomal protein uS13 family. Part of the 30S ribosomal subunit. Forms a loose heterodimer with protein S19. Forms two bridges to the 50S subunit in the 70S ribosome.

Functionally, located at the top of the head of the 30S subunit, it contacts several helices of the 16S rRNA. In the 70S ribosome it contacts the 23S rRNA (bridge B1a) and protein L5 of the 50S subunit (bridge B1b), connecting the 2 subunits; these bridges are implicated in subunit movement. Contacts the tRNAs in the A and P-sites. This chain is Small ribosomal subunit protein uS13, found in Sulfurimonas denitrificans (strain ATCC 33889 / DSM 1251) (Thiomicrospira denitrificans (strain ATCC 33889 / DSM 1251)).